The chain runs to 132 residues: MRAFLEEFKKFISRGNALDLAVGVVIGGAFGKIVTSFVADLFTPVLGLMIGGVSFQNLVWKIGGSPEDPVTINYGSFLQAVFDFVIIAFAIFLLVKAINTLQRKEEESPPTLPPPEVVLLTEIRDILNRHSQ.

A run of 2 helical transmembrane segments spans residues 11 to 31 (FISR…GAFG) and 75 to 95 (GSFL…FLLV).

This sequence belongs to the MscL family. Homopentamer.

The protein localises to the cell inner membrane. Its function is as follows. Channel that opens in response to stretch forces in the membrane lipid bilayer. May participate in the regulation of osmotic pressure changes within the cell. In Synechococcus sp. (strain JA-3-3Ab) (Cyanobacteria bacterium Yellowstone A-Prime), this protein is Large-conductance mechanosensitive channel.